A 360-amino-acid chain; its full sequence is Teichoic acids export ATP-binding protein TagH (360 aa).

Residues 24-245 (LKAMFFPKTR…YEDYINWFNK (222 aa)) form the ABC transporter domain. 59–66 (GINGSGKS) is an ATP binding site. Residues 246 to 360 (LSKEEKEAHK…GDIDNSDVSL (115 aa)) are unknown. Positions 270–290 (EEQENGKAGSGGDGTQPIVQP) are disordered.

It belongs to the ABC transporter superfamily. Teichoic acids exporter (TC 3.A.1.104.1) family. The complex is composed of two ATP-binding proteins (TagH) and two transmembrane proteins (TagG).

Its subcellular location is the cell membrane. The catalysed reaction is ATP + H2O + teichoic acidSide 1 = ADP + phosphate + teichoic acidSide 2.. Its function is as follows. Part of the ABC transporter complex TagGH involved in teichoic acids export. Responsible for energy coupling to the transport system. The polypeptide is Teichoic acids export ATP-binding protein TagH (Shouchella clausii (strain KSM-K16) (Alkalihalobacillus clausii)).